A 205-amino-acid chain; its full sequence is Cytochrome c biogenesis ATP-binding export protein CcmA 1 (205 aa).

An ABC transporter domain is found at Leu-2 to Leu-205. Position 34-41 (Gly-34–Thr-41) interacts with ATP.

Belongs to the ABC transporter superfamily. CcmA exporter (TC 3.A.1.107) family. In terms of assembly, the complex is composed of two ATP-binding proteins (CcmA) and two transmembrane proteins (CcmB).

It is found in the cell inner membrane. It catalyses the reaction heme b(in) + ATP + H2O = heme b(out) + ADP + phosphate + H(+). In terms of biological role, part of the ABC transporter complex CcmAB involved in the biogenesis of c-type cytochromes; once thought to export heme, this seems not to be the case, but its exact role is uncertain. Responsible for energy coupling to the transport system. The protein is Cytochrome c biogenesis ATP-binding export protein CcmA 1 of Salmonella typhimurium (strain LT2 / SGSC1412 / ATCC 700720).